We begin with the raw amino-acid sequence, 949 residues long: ATPase 1, plasma membrane-type (949 aa).

S2 is modified (N-acetylserine). The Cytoplasmic segment spans residues 2–61; it reads SGLEDIKNETVDLEKIPIEEVFQQLKCTREGLTTQEGEDRIVIFGPNKLEEKKESKILKF. Residues 62-81 form a helical membrane-spanning segment; sequence LGFMWNPLSWVMEAAALMAI. At 82 to 93 the chain is on the extracellular side; it reads ALANGDNRPPDW. Residues 94-114 form a helical membrane-spanning segment; sequence QDFVGIICLLVINSTISFIEE. At 115-243 the chain is on the cytoplasmic side; that stretch reads NNAGNAAAAL…GHFQKVLTSI (129 aa). A helical transmembrane segment spans residues 244-264; the sequence is GNFCICSIAIGIAIEIVVMYP. Topologically, residues 265 to 273 are extracellular; it reads IQHRKYRDG. The helical transmembrane segment at 274–291 threads the bilayer; sequence IDNLLVLLIGGIPIAMPT. The Cytoplasmic portion of the chain corresponds to 292-643; that stretch reads VLSVTMAIGS…TSRAIFQRMK (352 aa). The active-site 4-aspartylphosphate intermediate is D329. Residues D588 and D592 each contribute to the Mg(2+) site. Residues 644-665 traverse the membrane as a helical segment; that stretch reads NYTIYAVSITIRIVFGFMLIAL. Over 666 to 670 the chain is Extracellular; the sequence is IWEFD. Residues 671–693 traverse the membrane as a helical segment; it reads FSAFMVLIIAILNDGTIMTISKD. Topologically, residues 694 to 709 are cytoplasmic; it reads RVKPSPTPDSWKLKEI. The helical transmembrane segment at 710–730 threads the bilayer; sequence FATGIVLGGYQAIMSVIFFWA. The Extracellular portion of the chain corresponds to 731–751; it reads AHKTDFFSDKFGVRSIRDNND. A helical transmembrane segment spans residues 752–772; it reads ELMGAVYLQVSIISQALIFVT. The Cytoplasmic portion of the chain corresponds to 773–784; the sequence is RSRSWSFVERPG. Residues 785–805 traverse the membrane as a helical segment; that stretch reads ALLMIAFVIAQLVATLIAVYA. Over 806–813 the chain is Extracellular; it reads DWTFAKVK. The chain crosses the membrane as a helical span at residues 814-834; the sequence is GIGWGWAGVIWIYSIVTYFPQ. The Cytoplasmic portion of the chain corresponds to 835 to 949; the sequence is DILKFAIRYI…IDTAGHHYTV (115 aa). T881 carries the post-translational modification Phosphothreonine. S899 and S931 each carry phosphoserine. Residues 947 to 949 are interaction with 14-3-3 proteins; the sequence is YTV. T948 is subject to Phosphothreonine.

The protein belongs to the cation transport ATPase (P-type) (TC 3.A.3) family. Type IIIA subfamily. As to quaternary structure, binds to 14-3-3 proteins. The binding is induced by phosphorylation of Thr-948. Binding to 14-3-3 proteins activates the H(+)-ATPase. Interacts with PPI1; this interaction promotes ATPase activity. Interacts with PSY1R. Part of a functional complex containing PSKR1, BAK1, CNGC17, and AHA. Interacts with CNGC17 and PSKR1. Triggered by SAUR9 via the phosphorylation of the C-terminal autoinhibitory domain. Interacts with AHA2. Binds to CBC1 and CBC2. Phosphorylated, probably by PHOT1 and PHOT2, at C-terminal Thr-948 in guard cells in response to blue light to induce stomatal opening. In terms of tissue distribution, expressed in guard cells, mesophyll cells, leaves and roots.

It localises to the cell membrane. The enzyme catalyses ATP + H2O + H(+)(in) = ADP + phosphate + 2 H(+)(out). Its activity is regulated as follows. Phosphorylation on Thr residues is repressed by tyrphostin 9, sphingosine, GW5074 and BML-265. By contrast, the fungal phytotoxin fusicoccin (FC) promotes phosphorylation of Thr-948 independently to BHP, thus leading to large stomatal opening. In terms of biological role, the plasma membrane H(+) ATPase of plants and fungi generates a proton gradient that drives the active transport of nutrients by H(+)-symport. The resulting external acidification and/or internal alkinization may mediate growth responses. Forms a functional cation-translocating unit with CNGC17 that is activated by PSKR1/BAK1 and possibly other BAK1/RLK complexes. Promotes stomatal opening in response to blue light. This Arabidopsis thaliana (Mouse-ear cress) protein is ATPase 1, plasma membrane-type.